The chain runs to 1187 residues: DNA-directed RNA polymerase subunit beta (1187 aa).

The interval 1150–1187 (KDEDDDPASSADDLGFNIGARPDAAAKEDQKAEEPEYQ) is disordered. A compositionally biased stretch (basic and acidic residues) spans 1173–1187 (AAAKEDQKAEEPEYQ).

It belongs to the RNA polymerase beta chain family. The RNAP catalytic core consists of 2 alpha, 1 beta, 1 beta' and 1 omega subunit. When a sigma factor is associated with the core the holoenzyme is formed, which can initiate transcription.

It catalyses the reaction RNA(n) + a ribonucleoside 5'-triphosphate = RNA(n+1) + diphosphate. In terms of biological role, DNA-dependent RNA polymerase catalyzes the transcription of DNA into RNA using the four ribonucleoside triphosphates as substrates. This is DNA-directed RNA polymerase subunit beta from Bifidobacterium longum (strain DJO10A).